Here is a 329-residue protein sequence, read N- to C-terminus: UDP-2,3-diacylglucosamine pyrophosphatase LpxG (329 aa).

Residues 2-24 (FVSVGITASLTTILAAPVLTWVW) traverse the membrane as a helical segment. 6 residues coordinate a divalent metal cation: D59, H61, D91, N123, H257, and H259.

The protein belongs to the metallophosphoesterase superfamily. LpxG family. It depends on Mn(2+) as a cofactor.

It localises to the cell inner membrane. It carries out the reaction UDP-2,3-diacyl-alpha-D-glucosamine + H2O = 2,3-diacyl-alpha-D-glucosaminyl 1-phosphate + UMP + 2 H(+). It participates in glycolipid biosynthesis; lipid IV(A) biosynthesis. Its function is as follows. Hydrolyzes the pyrophosphate bond of UDP-2,3-diacylglucosamine to form 2,3-diacylglucosamine 1-phosphate (lipid X) and UMP by catalyzing the attack of water at the alpha-P atom. Involved in the biosynthesis of lipid A, a phosphorylated glycolipid that anchors the lipooligosaccharide (LOS) to the outer membrane of the cell. Can functionally complement lpxH deficiency in E.coli. Overexpression of LpxG results in toxic accumulation of lipid X and profoundly reduces the infectivity of C.trachomatis. Can utilize UDP-2-N,3-O-bis((3R)-3-hydroxytetradecanoyl)-alpha-D-glucosamine as substrate in vitro, but the substrate is likely UDP-2-N-((3R)-3-hydroxyicosanoyl),3-O-(tetradecanoyl)-alpha-D-glucosamine in vivo. In Chlamydia trachomatis serovar D (strain ATCC VR-885 / DSM 19411 / UW-3/Cx), this protein is UDP-2,3-diacylglucosamine pyrophosphatase LpxG.